We begin with the raw amino-acid sequence, 142 residues long: Protein archease (142 aa).

Ca(2+) contacts are provided by D12, D141, and L142.

Belongs to the archease family.

In terms of biological role, activates the tRNA-splicing ligase complex by facilitating the enzymatic turnover of catalytic subunit RtcB. Acts by promoting the guanylylation of RtcB, a key intermediate step in tRNA ligation. Can also alter the NTP specificity of RtcB such that ATP, dGTP or ITP is used efficiently. The polypeptide is Protein archease (Thermococcus gammatolerans (strain DSM 15229 / JCM 11827 / EJ3)).